A 173-amino-acid polypeptide reads, in one-letter code: T-cell surface glycoprotein CD3 delta chain (173 aa).

Residues 1-21 (MEHSGILASLILIAVLPQGSP) form the signal peptide. Over 22 to 105 (FKIQVTEYED…CVELDSGTMA (84 aa)) the chain is Extracellular. A disulfide bridge connects residues cysteine 37 and cysteine 73. 3 N-linked (GlcNAc...) asparagine glycosylation sites follow: asparagine 38, asparagine 55, and asparagine 74. The helical transmembrane segment at 106–126 (GVIFIDLIATLLLALGVYCFA) threads the bilayer. Residues 127-173 (GHETGRPSGAAEVQALLKNEQLYQPLRDREDTQYSRLGGNWPRNKKS) are Cytoplasmic-facing. Residues 138–166 (EVQALLKNEQLYQPLRDREDTQYSRLGGN) enclose the ITAM domain. Phosphotyrosine occurs at positions 149 and 160.

In terms of assembly, the TCR-CD3 complex is composed of a CD3D/CD3E and a CD3G/CD3E heterodimers that preferentially associate with TCRalpha and TCRbeta, respectively, to form TCRalpha/CD3E/CD3G and TCRbeta/CD3G/CD3E trimers. In turn, the hexamer interacts with CD3Z homodimer to form the TCR-CD3 complex. Alternatively, TCRalpha and TCRbeta can be replaced by TCRgamma and TCRdelta. Interacts with coreceptors CD4 and CD8. Post-translationally, phosphorylated on Tyr residues after T-cell receptor triggering by LCK in association with CD4/CD8.

Its subcellular location is the membrane. In terms of biological role, part of the TCR-CD3 complex present on T-lymphocyte cell surface that plays an essential role in adaptive immune response. When antigen presenting cells (APCs) activate T-cell receptor (TCR), TCR-mediated signals are transmitted across the cell membrane by the CD3 chains CD3D, CD3E, CD3G and CD3Z. All CD3 chains contain immunoreceptor tyrosine-based activation motifs (ITAMs) in their cytoplasmic domain. Upon TCR engagement, these motifs become phosphorylated by Src family protein tyrosine kinases LCK and FYN, resulting in the activation of downstream signaling pathways. In addition of this role of signal transduction in T-cell activation, CD3D plays an essential role in thymocyte differentiation. Indeed, participates in correct intracellular TCR-CD3 complex assembly and surface expression. In absence of a functional TCR-CD3 complex, thymocytes are unable to differentiate properly. Interacts with CD4 and CD8 and thus serves to establish a functional link between the TCR and coreceptors CD4 and CD8, which is needed for activation and positive selection of CD4 or CD8 T-cells. In Mus musculus (Mouse), this protein is T-cell surface glycoprotein CD3 delta chain (Cd3d).